Reading from the N-terminus, the 427-residue chain is L-threonine dehydratase biosynthetic IlvA (427 aa).

Position 63 is an N6-(pyridoxal phosphate)lysine (Lys-63). Pyridoxal 5'-phosphate-binding positions include Asn-90, 193–197 (GGGGC), and Ser-319. Positions 343–417 (HYFLVDFPQK…TEMHVETLQP (75 aa)) constitute an ACT-like domain.

It belongs to the serine/threonine dehydratase family. Homotetramer. The cofactor is pyridoxal 5'-phosphate.

The catalysed reaction is L-threonine = 2-oxobutanoate + NH4(+). The protein operates within amino-acid biosynthesis; L-isoleucine biosynthesis; 2-oxobutanoate from L-threonine: step 1/1. In terms of biological role, catalyzes the anaerobic formation of alpha-ketobutyrate and ammonia from threonine in a two-step reaction. The first step involved a dehydration of threonine and a production of enamine intermediates (aminocrotonate), which tautomerizes to its imine form (iminobutyrate). Both intermediates are unstable and short-lived. The second step is the nonenzymatic hydrolysis of the enamine/imine intermediates to form 2-ketobutyrate and free ammonia. In the low water environment of the cell, the second step is accelerated by RidA. This chain is L-threonine dehydratase biosynthetic IlvA (ilvA), found in Mycobacterium leprae (strain TN).